Here is a 594-residue protein sequence, read N- to C-terminus: MVLRSHPFPRQDRPQGSVPRAVPGSPVGPSTSTHSEDRHGPSSSVGTVIGTGTGGLVEAGGQPQPRSSETNGSPSPDPPPGLRGEGTREKSLDPLPQAAMPRGPAQPPAQRPPGPAASSSARRSQPVPQLRKRSRCEIAPSSEQEVRPAASGDPQGEAPGEGGSPAGRSGALTEKQEEARKLMVFLQRPGGWGVVEGPRKPSSRALEPATAAALRRRLDLGSCLDVLAFAQQHGEPGLAQETYALMSDNLLRVLGDPCLYRRLSAADRERILSLRTGRGRAVLGVLVLPSLYQGGRSGLPRGPRGEEPPAAAPVSLPLPAHLHVFNPRENTWRPLTQVPEEAPLRGCGLCTMHNYLFLAGGIRGSGAKAVCSNEVFCYNPLTNIWSQVRPMQQARAQLKLVALDGLLYAIGGECLYSMECYDPRTDAWTPRAPLPAGTFPVAHEAVACRGDIYVTGGHLFYRLLRYSPVKDAWDECPYSASHRRSSDIVALGGFLYRFDLLRGVGAAVMRYNTVTGSWSRAASLPLPAPAPLHCTTLGNTIYCLNPQVTATFTVSGGTAQFQAKELQPFPLGSTGVLSPFILTLPPEDRLQTSL.

The interval 1–174 (MVLRSHPFPR…PAGRSGALTE (174 aa)) is disordered. Residues 49–58 (IGTGTGGLVE) are compositionally biased toward gly residues. Residues 64–74 (QPRSSETNGSP) are compositionally biased toward polar residues. Over residues 104–115 (PAQPPAQRPPGP) the composition is skewed to pro residues. Positions 116–126 (AASSSARRSQP) are enriched in low complexity. Kelch repeat units lie at residues 306-354 (EEPP…TMHN), 355-405 (YLFL…ALDG), 406-448 (LLYA…AVAC), 451-493 (DIYV…ALGG), and 495-538 (LYRF…TTLG).

The protein is Kelch domain-containing protein 7B (KLHDC7B) of Homo sapiens (Human).